The following is an 819-amino-acid chain: Glycine-rich domain-containing protein 1 (819 aa).

Plays a regulatory role in abscisic acid (ABA) signaling and tolerance to abiotic stress during germination. May be involved in the regulation of the ABI transcriptional factors. This Arabidopsis thaliana (Mouse-ear cress) protein is Glycine-rich domain-containing protein 1.